Here is a 504-residue protein sequence, read N- to C-terminus: Sodium-coupled neutral amino acid symporter 2 (504 aa).

The tract at residues 1 to 22 is disordered; that stretch reads MKKTEMGRFNISPDEDSSSYSS. Residues 1-76 are Cytoplasmic-facing; that stretch reads MKKTEMGRFN…HPGTTSFGMS (76 aa). The regulates protein turnover upon amino acid deprivation stretch occupies residues 1–96; sequence MKKTEMGRFN…SGILGLSYAM (96 aa). Phosphoserine is present on residues Ser12, Ser21, Ser22, and Ser55. A helical membrane pass occupies residues 77 to 96; sequence VFNLSNAIVGSGILGLSYAM. Residue Asn82 participates in Na(+) binding. At 97–102 the chain is on the extracellular side; sequence ANTGIA. A helical transmembrane segment spans residues 103 to 123; the sequence is LFIILLTFVSIFSLYSVHLLL. Topologically, residues 124-158 are cytoplasmic; that stretch reads KTANEGGSLLYEQLGHKAYGLAGKLAASGSITMQN. The chain crosses the membrane as a helical span at residues 159–177; it reads IGAMSSYLFIVKYELPLVI. At 178 to 188 the chain is on the extracellular side; the sequence is KALMNIEDTNG. A helical membrane pass occupies residues 189 to 209; sequence LWYLNGDYLVLLVSFVLILPL. The Cytoplasmic portion of the chain corresponds to 210–217; that stretch reads SLLRNLGY. The chain crosses the membrane as a helical span at residues 218–238; it reads LGYTSGLSLLCMIFFLIVVIC. Topologically, residues 239–290 are extracellular; the sequence is KKFQIPCPVEVALMANETVNGTFTQVALAALASNSTAADTCRPRYFIFNSQT. A disulfide bond links Cys245 and Cys279. 3 N-linked (GlcNAc...) asparagine glycosylation sites follow: Asn254, Asn258, and Asn272. The chain crosses the membrane as a helical span at residues 291 to 311; that stretch reads VYAVPILTFSFVCHPAVLPIY. Residues 312–327 are Cytoplasmic-facing; it reads EELKSRSRRRMMNVSK. The helical transmembrane segment at 328 to 348 threads the bilayer; the sequence is ISFFAMFLMYLLAALFGYLTF. The Extracellular segment spans residues 349 to 369; sequence YEHVESELLHTYSAIVGTDIL. The helical transmembrane segment at 370-390 threads the bilayer; that stretch reads LLVVRLAVLVAVTLTVPVVIF. Residue Thr384 coordinates Na(+). Topologically, residues 391 to 411 are cytoplasmic; that stretch reads PIRSSVTHLLCPTKEFSWFRH. The helical transmembrane segment at 412-432 threads the bilayer; it reads SVITVTILAFTNLLVIFVPTI. Residues 433–434 are Extracellular-facing; that stretch reads RD. The helical transmembrane segment at 435–455 threads the bilayer; it reads IFGFIGASAAAMLIFILPSAF. At 456–470 the chain is on the cytoplasmic side; that stretch reads YIKLVKKEPMRSVQK. Residues 471-493 traverse the membrane as a helical segment; that stretch reads IGALCFLLSGVVVMIGSMGLIVL. Residues 494–504 are Extracellular-facing; the sequence is DWVHDASAGGH.

This sequence belongs to the amino acid/polyamine transporter 2 family. Polyubiquitination by NEDD4L regulates the degradation and the activity of SLC38A2. In terms of tissue distribution, widely expressed. Expressed in skeletal muscle and adipose tissue (at protein level). Expressed by glutamatergic and GABAergic neurons together with astrocytes and other non-neuronal cells in the cerebral cortex (at protein level). Widely expressed in the central nervous systeme where, it is enriched in the spinal cord and the brainstem nuclei, especially those of the auditory system.

It localises to the cell membrane. It catalyses the reaction L-alanine(in) + Na(+)(in) = L-alanine(out) + Na(+)(out). It carries out the reaction glycine(in) + Na(+)(in) = glycine(out) + Na(+)(out). The catalysed reaction is L-serine(in) + Na(+)(in) = L-serine(out) + Na(+)(out). The enzyme catalyses L-proline(in) + Na(+)(in) = L-proline(out) + Na(+)(out). It catalyses the reaction L-methionine(in) + Na(+)(in) = L-methionine(out) + Na(+)(out). It carries out the reaction L-histidine(in) + Na(+)(in) = L-histidine(out) + Na(+)(out). The catalysed reaction is L-asparagine(in) + Na(+)(in) = L-asparagine(out) + Na(+)(out). The enzyme catalyses L-glutamine(in) + Na(+)(in) = L-glutamine(out) + Na(+)(out). It catalyses the reaction L-threonine(in) + Na(+)(in) = L-threonine(out) + Na(+)(out). It carries out the reaction L-leucine(in) + Na(+)(in) = L-leucine(out) + Na(+)(out). The catalysed reaction is L-phenylalanine(in) + Na(+)(in) = L-phenylalanine(out) + Na(+)(out). Inhibited by N-methyl-D-glucamine. Inhibited by choline. Allosteric regulation of sodium ions binding by pH. In terms of biological role, symporter that cotransports neutral amino acids and sodium ions from the extracellular to the intracellular side of the cell membrane. The transport is pH-sensitive, Li(+)-intolerant, electrogenic, driven by the Na(+) electrochemical gradient and cotransports of neutral amino acids and sodium ions with a stoichiometry of 1:1. May function in the transport of amino acids at the blood-brain barrier. May function in the transport of amino acids in the supply of maternal nutrients to the fetus through the placenta. Maintains a key metabolic glutamine/glutamate balance underpinning retrograde signaling by dendritic release of the neurotransmitter glutamate. Transports L-proline in differentiating osteoblasts for the efficient synthesis of proline-enriched proteins and provides proline essential for osteoblast differentiation and bone formation during bone development. This Rattus norvegicus (Rat) protein is Sodium-coupled neutral amino acid symporter 2.